A 258-amino-acid polypeptide reads, in one-letter code: Pyridoxine 5'-phosphate synthase (258 aa).

Asn16 is a binding site for 3-amino-2-oxopropyl phosphate. Position 18 to 19 (18 to 19 (DH)) interacts with 1-deoxy-D-xylulose 5-phosphate. Arg27 is a 3-amino-2-oxopropyl phosphate binding site. His52 functions as the Proton acceptor in the catalytic mechanism. 1-deoxy-D-xylulose 5-phosphate contacts are provided by Arg54 and His59. Catalysis depends on Glu79, which acts as the Proton acceptor. Thr109 lines the 1-deoxy-D-xylulose 5-phosphate pocket. The active-site Proton donor is the His200. Residues Gly201 and 222–223 (GH) contribute to the 3-amino-2-oxopropyl phosphate site.

This sequence belongs to the PNP synthase family. As to quaternary structure, homooctamer; tetramer of dimers.

The protein resides in the cytoplasm. It carries out the reaction 3-amino-2-oxopropyl phosphate + 1-deoxy-D-xylulose 5-phosphate = pyridoxine 5'-phosphate + phosphate + 2 H2O + H(+). It functions in the pathway cofactor biosynthesis; pyridoxine 5'-phosphate biosynthesis; pyridoxine 5'-phosphate from D-erythrose 4-phosphate: step 5/5. Functionally, catalyzes the complicated ring closure reaction between the two acyclic compounds 1-deoxy-D-xylulose-5-phosphate (DXP) and 3-amino-2-oxopropyl phosphate (1-amino-acetone-3-phosphate or AAP) to form pyridoxine 5'-phosphate (PNP) and inorganic phosphate. The chain is Pyridoxine 5'-phosphate synthase from Burkholderia lata (strain ATCC 17760 / DSM 23089 / LMG 22485 / NCIMB 9086 / R18194 / 383).